The following is a 620-amino-acid chain: MAKHQFQTEIGQLLKLMTHSLYSNKEIFIRELISNASDALDKFNYLSLTDEKFKEENWSGKISIKLDKDDNSLTIGDNGIGMNEEDLMDNLGTIAKSGTKAFMENLTGDAKKDSNLIGQFGVGFYSVFMVAEKVDVISKKAGEEQAYMFSTDGTGEYEVKPVTKDEHGTVIYIKLKEDEKEFLDKWRVQEVVKKYSNHIAYPIILNYTEEETTGEGDEKETKTVQKSEQINEATALWTLPKSELKEEDYIEFYKTISHGDDEPLTYLHNKVEGANEFTTLFYIPKKAPMDLYRADYQPGVKLYVKRVFITDDDKELLPPYLRFVRGIIDSEDLPLNVSRELLQENRILANIKQNSVKKILGAIKKLDSEKMEIFTEQYNRVIKEGIYTDHTNKETLLGIVRYKSSSEEGMVSLDDYISRGDSEKKEIYYIVGADEKVLRNSPLLEAYKKANIEVLIMDDEEVDSIVAPMIGSYKEWTFKDITTIDAPDSKTEEEKEEISKEFKPLTDKIKEVLGDEVKEVKISTRLTESPSCVLKDASDPMAGMAAMFAQMGQEMPEIPLILEINPEHEMIKKLDKVEDESLFNDLSWILLDSAKLSEGLEPKDKGAFAHRVASLATKAL.

The segment at 1-339 (MAKHQFQTEI…SEDLPLNVSR (339 aa)) is a; substrate-binding. The b stretch occupies residues 340–546 (ELLQENRILA…ASDPMAGMAA (207 aa)). Residues 547 to 620 (MFAQMGQEMP…RVASLATKAL (74 aa)) form a c region.

Belongs to the heat shock protein 90 family. As to quaternary structure, homodimer.

Its subcellular location is the cytoplasm. In terms of biological role, molecular chaperone. Has ATPase activity. The chain is Chaperone protein HtpG from Sulfurovum sp. (strain NBC37-1).